Reading from the N-terminus, the 268-residue chain is Xyloglucan endotransglucosylase protein 7 (268 aa).

The region spanning Met-1–Tyr-196 is the GH16 domain. The active-site Nucleophile is the Glu-82. Glu-86 acts as the Proton donor in catalysis. Glu-86 lines the xyloglucan pocket. Asn-90 is a glycosylation site (N-linked (GlcNAc...) asparagine). Residues His-99–Asn-101, Asn-109–Glu-111, Asp-175–Trp-176, and Gly-180 each bind xyloglucan. 2 disulfide bridges follow: Cys-204–Cys-213 and Cys-251–Cys-265. Arg-256 contacts xyloglucan.

Belongs to the glycosyl hydrolase 16 family. XTH group 2 subfamily. In terms of processing, contains at least one intrachain disulfide bond essential for its enzymatic activity. Expressed at a very high level in flowers and stems (picked at anthesis), and at a lower level in ripe leaves and fruits.

It is found in the cytoplasm. The enzyme catalyses breaks a beta-(1-&gt;4) bond in the backbone of a xyloglucan and transfers the xyloglucanyl segment on to O-4 of the non-reducing terminal glucose residue of an acceptor, which can be a xyloglucan or an oligosaccharide of xyloglucan.. In terms of biological role, catalyzes xyloglucan endotransglycosylation (XET). Cleaves and religates xyloglucan polymers. Does not catalyze xyloglucan endohydrolysis (XEH). Probably involved in cell wall assembly and synthesis in fast growing tissues and in the maintenance of firmness in mature fruits. The sequence is that of Xyloglucan endotransglucosylase protein 7 from Diospyros kaki (Kaki persimmon).